The sequence spans 505 residues: Trans-cinnamate 4-monooxygenase (505 aa).

The helical transmembrane segment at 3-23 (LLLLEKTLLGSFVAILVAILV) threads the bilayer. Residues 213–218 (RSRLAQ) and Ala-306 each bind (E)-cinnamate. Cys-447 lines the heme pocket.

This sequence belongs to the cytochrome P450 family. It depends on heme as a cofactor.

The protein resides in the membrane. The enzyme catalyses (E)-cinnamate + reduced [NADPH--hemoprotein reductase] + O2 = (E)-4-coumarate + oxidized [NADPH--hemoprotein reductase] + H2O + H(+). Its pathway is phenylpropanoid metabolism; trans-4-coumarate biosynthesis; trans-4-coumarate from trans-cinnamate: step 1/1. Catalyzes the first oxidative step of the phenylpropanoid pathway in higher plants by transforming trans-cinnamate into p-coumarate. The compounds formed by this pathway are essential components for lignification, pollination, and defense against ultraviolet light, predators and pathogens. The sequence is that of Trans-cinnamate 4-monooxygenase (CYP73A13) from Populus tremuloides (Quaking aspen).